The chain runs to 63 residues: Large ribosomal subunit protein bL35 (63 aa).

The tract at residues 26 to 50 is disordered; the sequence is GSGMRHNLEHKSARKRRALKRDDVL.

This sequence belongs to the bacterial ribosomal protein bL35 family.

This chain is Large ribosomal subunit protein bL35, found in Bifidobacterium animalis subsp. lactis (strain AD011).